The following is a 375-amino-acid chain: Peroxisomal targeting signal 2 receptor (375 aa).

WD repeat units lie at residues 58-89, 102-133, 172-203, 218-249, 281-312, and 340-372; these read LTQD…RLFD, EHER…KIWS, KNRN…SLFD, HSGL…RIWD, AHGL…RIWR, and QHSE…FVWN.

Belongs to the WD repeat peroxin-7 family. In terms of assembly, interacts with PEX21.

The protein localises to the cytoplasm. It localises to the cytosol. The protein resides in the peroxisome matrix. In terms of biological role, receptor required for the peroxisomal import of proteins containing a C-terminal PTS2-type peroxisomal targeting signal, such as 3-oxoacyl-CoA thiolase. Specifically binds to cargo proteins containing a PTS2 peroxisomal targeting signal in the cytosol. Cargo protein-binding triggers interaction with PEX21 and formation of a ternary complex composed of PEX21 and PEX7 along with PTS2-containing cargo proteins, which is tranlocated into peroxisomes by passing through the PEX13-PEX14 docking complex. The chain is Peroxisomal targeting signal 2 receptor from Saccharomyces cerevisiae (strain ATCC 204508 / S288c) (Baker's yeast).